The chain runs to 152 residues: 6,7-dimethyl-8-ribityllumazine synthase (152 aa).

5-amino-6-(D-ribitylamino)uracil is bound by residues phenylalanine 24, 56–58, and 80–82; these read SFE and VVV. 85–86 is a binding site for (2S)-2-hydroxy-3-oxobutyl phosphate; it reads ET. The active-site Proton donor is histidine 88. Residue phenylalanine 113 coordinates 5-amino-6-(D-ribitylamino)uracil. Residue arginine 127 participates in (2S)-2-hydroxy-3-oxobutyl phosphate binding.

It belongs to the DMRL synthase family.

The enzyme catalyses (2S)-2-hydroxy-3-oxobutyl phosphate + 5-amino-6-(D-ribitylamino)uracil = 6,7-dimethyl-8-(1-D-ribityl)lumazine + phosphate + 2 H2O + H(+). It participates in cofactor biosynthesis; riboflavin biosynthesis; riboflavin from 2-hydroxy-3-oxobutyl phosphate and 5-amino-6-(D-ribitylamino)uracil: step 1/2. Its function is as follows. Catalyzes the formation of 6,7-dimethyl-8-ribityllumazine by condensation of 5-amino-6-(D-ribitylamino)uracil with 3,4-dihydroxy-2-butanone 4-phosphate. This is the penultimate step in the biosynthesis of riboflavin. This is 6,7-dimethyl-8-ribityllumazine synthase from Thermococcus onnurineus (strain NA1).